A 640-amino-acid polypeptide reads, in one-letter code: 5-aminolevulinate synthase, non-specific, mitochondrial (640 aa).

Residues 1 to 56 (METVVRSCPFLSRVPQAFLQKAGKSLLFYAQNCPKMMEVGAKPAPRALSTAAVHYQ) constitute a mitochondrion transit peptide. Disordered stretches follow at residues 60–103 (ETPP…TSQG) and 143–163 (EVAE…GGDP). Residues 75 to 92 (VQQTPDGSQQSPDGTQLP) show a composition bias toward polar residues. Arginine 217, serine 334, and lysine 353 together coordinate substrate. Pyridoxal 5'-phosphate contacts are provided by serine 386, histidine 414, and threonine 442. Lysine 445 is a catalytic residue. N6-(pyridoxal phosphate)lysine is present on lysine 445. Residues threonine 474 and threonine 475 each contribute to the pyridoxal 5'-phosphate site. Residue threonine 562 coordinates substrate. Position 576 is a hydroxyproline (proline 576).

It belongs to the class-II pyridoxal-phosphate-dependent aminotransferase family. As to quaternary structure, homodimer. Interacts (hydroxylated form) with VHL. Pyridoxal 5'-phosphate serves as cofactor. In terms of processing, in normoxia, is hydroxylated at Pro-576, promoting interaction with VHL, initiating ubiquitination and subsequent degradation via the proteasome. Ubiquitinated; in normoxia following hydroxylation and interaction with VHL, leading to its subsequent degradation via the proteasome.

It is found in the mitochondrion inner membrane. It carries out the reaction succinyl-CoA + glycine + H(+) = 5-aminolevulinate + CO2 + CoA. Its pathway is porphyrin-containing compound metabolism; protoporphyrin-IX biosynthesis; 5-aminolevulinate from glycine: step 1/1. Functionally, catalyzes the pyridoxal 5'-phosphate (PLP)-dependent condensation of succinyl-CoA and glycine to form aminolevulinic acid (ALA), with CoA and CO2 as by-products. This is 5-aminolevulinate synthase, non-specific, mitochondrial (ALAS1) from Pongo abelii (Sumatran orangutan).